The sequence spans 462 residues: Glutamate--tRNA ligase 2 (462 aa).

The 'HIGH' region signature appears at Pro-8–Gly-18. Positions Lys-236–Arg-240 match the 'KMSKS' region motif. Lys-239 is a binding site for ATP.

The protein belongs to the class-I aminoacyl-tRNA synthetase family. Glutamate--tRNA ligase type 1 subfamily. Monomer.

It is found in the cytoplasm. The enzyme catalyses tRNA(Glu) + L-glutamate + ATP = L-glutamyl-tRNA(Glu) + AMP + diphosphate. Functionally, catalyzes the attachment of glutamate to tRNA(Glu) in a two-step reaction: glutamate is first activated by ATP to form Glu-AMP and then transferred to the acceptor end of tRNA(Glu). This chain is Glutamate--tRNA ligase 2, found in Nitratiruptor sp. (strain SB155-2).